The following is a 475-amino-acid chain: Sulfate adenylyltransferase subunit 1 (475 aa).

The 215-residue stretch at 25 to 239 folds into the tr-type G domain; the sequence is KSLLRFLTCG…EVLETVEIQR (215 aa). Residues 34–41 are G1; sequence GSVDDGKS. 34–41 provides a ligand contact to GTP; the sequence is GSVDDGKS. The G2 stretch occupies residues 92 to 96; that stretch reads GITID. The G3 stretch occupies residues 113–116; the sequence is DTPG. GTP is bound by residues 113-117 and 168-171; these read DTPGH and NKMD. The interval 168–171 is G4; sequence NKMD. The tract at residues 206–208 is G5; sequence SAL.

The protein belongs to the TRAFAC class translation factor GTPase superfamily. Classic translation factor GTPase family. CysN/NodQ subfamily. Heterodimer composed of CysD, the smaller subunit, and CysN.

The enzyme catalyses sulfate + ATP + H(+) = adenosine 5'-phosphosulfate + diphosphate. Its pathway is sulfur metabolism; hydrogen sulfide biosynthesis; sulfite from sulfate: step 1/3. Functionally, with CysD forms the ATP sulfurylase (ATPS) that catalyzes the adenylation of sulfate producing adenosine 5'-phosphosulfate (APS) and diphosphate, the first enzymatic step in sulfur assimilation pathway. APS synthesis involves the formation of a high-energy phosphoric-sulfuric acid anhydride bond driven by GTP hydrolysis by CysN coupled to ATP hydrolysis by CysD. This chain is Sulfate adenylyltransferase subunit 1, found in Escherichia coli O17:K52:H18 (strain UMN026 / ExPEC).